A 229-amino-acid chain; its full sequence is Ribonuclease S-6 (229 aa).

An N-terminal signal peptide occupies residues 1–27 (MGITGMIYMVPMVFSLIVLISCSSTMG). Gln36 lines the RNA pocket. An intrachain disulfide couples Cys42 to Cys49. Residue His60 coordinates RNA. His60 (proton donor) is an active-site residue. The cysteines at positions 75 and 119 are disulfide-linked. Residues Asn77 and Asn87 are each glycosylated (N-linked (GlcNAc) asparagine). Residues 98–99 (NV), Phe108, 111–112 (RQ), and 115–116 (KH) each bind RNA. Gln112 is an active-site residue. The Proton acceptor role is filled by His116. Asn145 carries an N-linked (GlcNAc...) (high mannose) asparagine glycan. Cystine bridges form between Cys184-Cys222 and Cys199-Cys210. Asn188 carries N-linked (GlcNAc) asparagine; alternate glycosylation. Residues Asn188 and Asn203 are each glycosylated (N-linked (GlcNAc...) asparagine; alternate).

This sequence belongs to the RNase T2 family. Post-translationally, the N-glycans attached at Asn-188 and Asn-203 consist of either monosaccharide (GlcNAc) or disaccharide (GlcNAc-GlcNAc) that could not be distinguished.

The catalysed reaction is a ribonucleotidyl-ribonucleotide-RNA + H2O = a 3'-end 3'-phospho-ribonucleotide-RNA + a 5'-end dephospho-ribonucleoside-RNA + H(+). Self-incompatibility (SI) is the inherited ability of a flowering plant to prevent self-fertilization by discriminating between self and non-self pollen during pollination. In many species, self-incompatibility is controlled by the single, multiallelic locus S. This is Ribonuclease S-6 from Pyrus pyrifolia (Chinese pear).